Reading from the N-terminus, the 444-residue chain is Light-independent protochlorophyllide reductase subunit N (444 aa).

Cys-36, Cys-61, and Cys-118 together coordinate [4Fe-4S] cluster.

This sequence belongs to the BchN/ChlN family. As to quaternary structure, protochlorophyllide reductase is composed of three subunits; BchL, BchN and BchB. Forms a heterotetramer of two BchB and two BchN subunits. [4Fe-4S] cluster is required as a cofactor.

The enzyme catalyses chlorophyllide a + oxidized 2[4Fe-4S]-[ferredoxin] + 2 ADP + 2 phosphate = protochlorophyllide a + reduced 2[4Fe-4S]-[ferredoxin] + 2 ATP + 2 H2O. It functions in the pathway porphyrin-containing compound metabolism; bacteriochlorophyll biosynthesis (light-independent). Its function is as follows. Component of the dark-operative protochlorophyllide reductase (DPOR) that uses Mg-ATP and reduced ferredoxin to reduce ring D of protochlorophyllide (Pchlide) to form chlorophyllide a (Chlide). This reaction is light-independent. The NB-protein (BchN-BchB) is the catalytic component of the complex. The sequence is that of Light-independent protochlorophyllide reductase subunit N from Chloroflexus aurantiacus (strain ATCC 29366 / DSM 635 / J-10-fl).